The chain runs to 292 residues: Mycothiol acetyltransferase (292 aa).

N-acetyltransferase domains are found at residues 13 to 168 (ALDR…KWLQ) and 159 to 292 (KSVA…VYEK). E40 is a binding site for 1D-myo-inositol 2-(L-cysteinylamino)-2-deoxy-alpha-D-glucopyranoside. 77–79 (LAV) contributes to the acetyl-CoA binding site. 1D-myo-inositol 2-(L-cysteinylamino)-2-deoxy-alpha-D-glucopyranoside contacts are provided by E179, K218, and E226. Residues 230-232 (VGL) and 237-243 (RGRGLGD) contribute to the acetyl-CoA site. A 1D-myo-inositol 2-(L-cysteinylamino)-2-deoxy-alpha-D-glucopyranoside-binding site is contributed by Y264.

This sequence belongs to the acetyltransferase family. MshD subfamily. Monomer.

The enzyme catalyses 1D-myo-inositol 2-(L-cysteinylamino)-2-deoxy-alpha-D-glucopyranoside + acetyl-CoA = mycothiol + CoA + H(+). Catalyzes the transfer of acetyl from acetyl-CoA to desacetylmycothiol (Cys-GlcN-Ins) to form mycothiol. The polypeptide is Mycothiol acetyltransferase (Corynebacterium glutamicum (strain R)).